A 509-amino-acid polypeptide reads, in one-letter code: Coiled-coil domain-containing protein 181 (509 aa).

Basic and acidic residues predominate over residues 58-82; that stretch reads VIEHTKQHSDPDKSLQDEVSPRKND. Disordered stretches follow at residues 58-120, 241-332, and 345-367; these read VIEH…EEED, PINN…VTST, and QLEQKREKLKREEERRKIEEEKE. Composition is skewed to polar residues over residues 243–266 and 300–332; these read NNANTTENDPQQLLPRSSNSSVSG and TCPSSAVISDQSKGNGNSNHRAQSAHISPVTST. Positions 335–375 form a coiled coil; sequence LSPRQKELQKQLEQKREKLKREEERRKIEEEKEKKRENDIV.

This sequence belongs to the CCDC181 family. In terms of assembly, homodimer. Interacts with HOOK1. Interacts with HOOK2. Interacts with HOOK3.

Its subcellular location is the cytoplasm. The protein resides in the cytoskeleton. The protein localises to the cell projection. It localises to the cilium. It is found in the flagellum. Its function is as follows. Microtubule-binding protein that localizes to the microtubular manchette of elongating spermatids. This chain is Coiled-coil domain-containing protein 181, found in Pongo abelii (Sumatran orangutan).